The chain runs to 189 residues: Protein CURLY FLAG LEAF 1 (189 aa).

The EAR motif lies at 50–55; that stretch reads TLELNS. One can recognise a WW domain in the interval 57–91; it reads LSLPCHWEQCLDLKTGEIYYINWKNGMRVKEDPRK. The interval 90–148 is disordered; sequence RKVMNADPDSGDSYGTVCSEEDSSYYDSEESSSESSPSSRENHKEEEEEEEEEEEEEED. Composition is skewed to acidic residues over residues 108-121 and 135-148; these read SEED…EESS and EEEE…EEED.

As to quaternary structure, interacts with BHLH122/CFLAP1 and BHLH80/CFLAP2. Binds to HDG1. In terms of tissue distribution, mostly observed in roots, flowers and siliques. Expressed in cells differentiated from epidermal cells such as trichomes, stigmatic papillar cells and guard cells, as well as in tissues undergoing abscission and dehiscence.

Functionally, negatively regulates the cuticle development by interacting with the HD-ZIP IV transcription factor HDG1. This is Protein CURLY FLAG LEAF 1 from Arabidopsis thaliana (Mouse-ear cress).